A 479-amino-acid chain; its full sequence is Ribosomal RNA small subunit methyltransferase F (479 aa).

Residues 125–131, Glu149, Asp176, and Asp194 contribute to the S-adenosyl-L-methionine site; that span reads AAAPGSK. Cys247 serves as the catalytic Nucleophile.

It belongs to the class I-like SAM-binding methyltransferase superfamily. RsmB/NOP family.

It localises to the cytoplasm. It catalyses the reaction cytidine(1407) in 16S rRNA + S-adenosyl-L-methionine = 5-methylcytidine(1407) in 16S rRNA + S-adenosyl-L-homocysteine + H(+). Specifically methylates the cytosine at position 1407 (m5C1407) of 16S rRNA. The chain is Ribosomal RNA small subunit methyltransferase F from Escherichia coli O6:H1 (strain CFT073 / ATCC 700928 / UPEC).